The following is a 582-amino-acid chain: Threonine--tRNA ligase (582 aa).

Residues Asp185–Pro478 are catalytic. Residues Cys278, His329, and His455 each contribute to the Zn(2+) site.

This sequence belongs to the class-II aminoacyl-tRNA synthetase family. In terms of assembly, homodimer. Zn(2+) serves as cofactor.

It is found in the cytoplasm. The enzyme catalyses tRNA(Thr) + L-threonine + ATP = L-threonyl-tRNA(Thr) + AMP + diphosphate + H(+). Its function is as follows. Catalyzes the attachment of threonine to tRNA(Thr) in a two-step reaction: L-threonine is first activated by ATP to form Thr-AMP and then transferred to the acceptor end of tRNA(Thr). Also edits incorrectly charged L-seryl-tRNA(Thr). This Borrelia garinii subsp. bavariensis (strain ATCC BAA-2496 / DSM 23469 / PBi) (Borreliella bavariensis) protein is Threonine--tRNA ligase.